Here is a 196-residue protein sequence, read N- to C-terminus: dITP/XTP pyrophosphatase (196 aa).

A substrate-binding site is contributed by 10-15 (TTNPHK). Catalysis depends on Asp68, which acts as the Proton acceptor. Asp68 provides a ligand contact to Mg(2+). Substrate is bound by residues Ser69, 148 to 151 (FGYD), and 175 to 176 (HR).

It belongs to the HAM1 NTPase family. In terms of assembly, homodimer. It depends on Mg(2+) as a cofactor.

The enzyme catalyses XTP + H2O = XMP + diphosphate + H(+). The catalysed reaction is dITP + H2O = dIMP + diphosphate + H(+). It carries out the reaction ITP + H2O = IMP + diphosphate + H(+). Pyrophosphatase that catalyzes the hydrolysis of nucleoside triphosphates to their monophosphate derivatives, with a high preference for the non-canonical purine nucleotides XTP (xanthosine triphosphate), dITP (deoxyinosine triphosphate) and ITP. Seems to function as a house-cleaning enzyme that removes non-canonical purine nucleotides from the nucleotide pool, thus preventing their incorporation into DNA/RNA and avoiding chromosomal lesions. The polypeptide is dITP/XTP pyrophosphatase (Thermotoga maritima (strain ATCC 43589 / DSM 3109 / JCM 10099 / NBRC 100826 / MSB8)).